Reading from the N-terminus, the 79-residue chain is Putative defensin-like protein 137 (79 aa).

An N-terminal signal peptide occupies residues 1–24 (MKKYFQPSFVILIIFTVLVLGVVG). Intrachain disulfides connect Cys-33/Cys-78, Cys-42/Cys-62, Cys-47/Cys-72, and Cys-51/Cys-74.

It belongs to the DEFL family.

Its subcellular location is the secreted. This Arabidopsis thaliana (Mouse-ear cress) protein is Putative defensin-like protein 137 (LCR14).